Consider the following 858-residue polypeptide: Potassium channel KOR1 (858 aa).

A disordered region spans residues 1–41 (MGRGIGSKRRVEDDDGENMPGRKKKEEEEEEEDDDGEEEYE). The Cytoplasmic segment spans residues 1-102 (MGRGIGSKRR…PDNKWYRLWT (102 aa)). Acidic residues predominate over residues 27 to 41 (EEEEEEDDDGEEEYE). The chain crosses the membrane as a helical span at residues 103–123 (RFILVWAVYSSFFTPLEFGFF). Topologically, residues 124-130 (RGLPRNL) are extracellular. A helical membrane pass occupies residues 131–151 (FFLDIAGQIAFLIDIVLRFFV). The Cytoplasmic segment spans residues 152-174 (AYRDPDTYRMVHNPTSIALRYCK). A helical transmembrane segment spans residues 175-195 (SSFIFDLLGCFPWDAIYKACG). Topologically, residues 196–201 (SKEEVR) are extracellular. The helical; Voltage-sensor transmembrane segment at 202–222 (YLLWIRLTRAMKVTEFFRSME) threads the bilayer. At 223-236 (KDIRINYLFTRIVK) the chain is on the cytoplasmic side. The helical transmembrane segment at 237 to 257 (LIVVELYCTHTAACIFYYLAT) threads the bilayer. Over 258 to 292 (TLPESMEGYTWIGSLQLGDYSYSHFREIDLTKRYM) the chain is Extracellular. The segment at residues 293–312 (TSLYFAIVTMATVGYGDIHA) is an intramembrane region (pore-forming). Residues 313–316 (VNVR) lie on the Extracellular side of the membrane. A helical transmembrane segment spans residues 317–337 (EMIFIMIYVSFDMILGAYLIG). Residues 338-858 (NMTALIVKGS…GDDGGTEARQ (521 aa)) are Cytoplasmic-facing. An a nucleoside 3',5'-cyclic phosphate-binding site is contributed by 419–539 (LFKGCSAEFI…RRILSNLSES (121 aa)). ANK repeat units follow at residues 559–592 (KQEA…DPKN), 596–625 (DGRS…DIDL), 629–658 (FGNT…KLSL), 660–689 (NAGS…DPNA), 693–722 (DHRA…SVFA), and 726–756 (WGTT…ELSR). Residues 772-858 (RCSVFPHHPW…GDDGGTEARQ (87 aa)) form the KHA domain.

This sequence belongs to the potassium channel family. Plant (TC 1.A.1.4) subfamily.

Its subcellular location is the membrane. In terms of biological role, probable outward-rectifying potassium channel. The protein is Potassium channel KOR1 of Oryza sativa subsp. japonica (Rice).